We begin with the raw amino-acid sequence, 379 residues long: Homoserine O-succinyltransferase (379 aa).

One can recognise an AB hydrolase-1 domain in the interval 48-357; that stretch reads NAVLICHALS…SAHGHDAFLM (310 aa). Serine 154 serves as the catalytic Nucleophile. Arginine 224 contributes to the substrate binding site. Active-site residues include aspartate 319 and histidine 352. Substrate is bound at residue aspartate 353.

The protein belongs to the AB hydrolase superfamily. MetX family. As to quaternary structure, homodimer.

Its subcellular location is the cytoplasm. The catalysed reaction is L-homoserine + succinyl-CoA = O-succinyl-L-homoserine + CoA. It participates in amino-acid biosynthesis; L-methionine biosynthesis via de novo pathway; O-succinyl-L-homoserine from L-homoserine: step 1/1. Functionally, transfers a succinyl group from succinyl-CoA to L-homoserine, forming succinyl-L-homoserine. The chain is Homoserine O-succinyltransferase from Neisseria meningitidis serogroup B (strain ATCC BAA-335 / MC58).